Consider the following 107-residue polypeptide: Multidrug resistance protein mmr (107 aa).

A run of 4 helical transmembrane segments spans residues 2 to 19, 29 to 51, 58 to 80, and 84 to 106; these read TYLF…ATSL, LWPT…VSIS, VAYA…LFLG, and SVTK…LTGA.

This sequence belongs to the drug/metabolite transporter (DMT) superfamily. Small multidrug resistance (SMR) (TC 2.A.7.1) family. Mmr subfamily.

The protein resides in the cell membrane. In terms of biological role, multidrug efflux pump. Confers resistance to tetraphenylphosphonium (TPP), erythromycin, ethidium bromide, acriflavine, safranin O and pyronin Y. In Mycolicibacterium paratuberculosis (strain ATCC BAA-968 / K-10) (Mycobacterium paratuberculosis), this protein is Multidrug resistance protein mmr (mmr).